Here is a 275-residue protein sequence, read N- to C-terminus: Mitochondrial outer membrane porin (275 aa).

The protein belongs to the eukaryotic mitochondrial porin (TC 1.B.8.1) family.

It localises to the mitochondrion outer membrane. In terms of biological role, forms a channel through the cell membrane that allows diffusion of small hydrophilic molecules. The channel adopts an open conformation at low or zero membrane potential and a closed conformation at potentials above 30-40 mV. The open state has a weak anion selectivity whereas the closed state is cation-selective. This Triticum aestivum (Wheat) protein is Mitochondrial outer membrane porin (VDAC1).